A 380-amino-acid polypeptide reads, in one-letter code: Cytochrome b (380 aa).

The next 4 membrane-spanning stretches (helical) occupy residues 34–54 (FGSL…LLAM), 78–99 (WLIR…YFHI), 114–134 (WNTG…GYVL), and 179–199 (FFAL…IHLT). The heme b site is built by His84 and His98. Heme b-binding residues include His183 and His197. His202 contacts a ubiquinone. 4 consecutive transmembrane segments (helical) span residues 227 to 247 (LKDI…ALFS), 289 to 309 (LGGV…PFLH), 321 to 341 (LSQL…WVGS), and 348 to 368 (FIII…VLFP).

This sequence belongs to the cytochrome b family. The cytochrome bc1 complex contains 11 subunits: 3 respiratory subunits (MT-CYB, CYC1 and UQCRFS1), 2 core proteins (UQCRC1 and UQCRC2) and 6 low-molecular weight proteins (UQCRH/QCR6, UQCRB/QCR7, UQCRQ/QCR8, UQCR10/QCR9, UQCR11/QCR10 and a cleavage product of UQCRFS1). This cytochrome bc1 complex then forms a dimer. It depends on heme b as a cofactor.

The protein localises to the mitochondrion inner membrane. In terms of biological role, component of the ubiquinol-cytochrome c reductase complex (complex III or cytochrome b-c1 complex) that is part of the mitochondrial respiratory chain. The b-c1 complex mediates electron transfer from ubiquinol to cytochrome c. Contributes to the generation of a proton gradient across the mitochondrial membrane that is then used for ATP synthesis. The polypeptide is Cytochrome b (MT-CYB) (Halobaena caerulea (Blue petrel)).